A 249-amino-acid chain; its full sequence is ATP synthase subunit a (249 aa).

A run of 5 helical transmembrane segments spans residues 33-53 (GQVF…SLLA), 92-112 (VPFI…GALI), 131-151 (INTT…AGFS), 196-216 (LVVA…AMIL), and 217-237 (GLFT…SYIG).

It belongs to the ATPase A chain family. In terms of assembly, F-type ATPases have 2 components, CF(1) - the catalytic core - and CF(0) - the membrane proton channel. CF(1) has five subunits: alpha(3), beta(3), gamma(1), delta(1), epsilon(1). CF(0) has four main subunits: a, b, b' and c.

The protein localises to the cellular thylakoid membrane. Its function is as follows. Key component of the proton channel; it plays a direct role in the translocation of protons across the membrane. In Synechococcus elongatus (strain ATCC 33912 / PCC 7942 / FACHB-805) (Anacystis nidulans R2), this protein is ATP synthase subunit a.